The chain runs to 191 residues: Peptidyl-tRNA hydrolase (191 aa).

Tyr15 serves as a coordination point for tRNA. His20 (proton acceptor) is an active-site residue. Residues Phe66, Asn68, and Asn114 each contribute to the tRNA site.

The protein belongs to the PTH family. In terms of assembly, monomer.

The protein resides in the cytoplasm. The enzyme catalyses an N-acyl-L-alpha-aminoacyl-tRNA + H2O = an N-acyl-L-amino acid + a tRNA + H(+). In terms of biological role, hydrolyzes ribosome-free peptidyl-tRNAs (with 1 or more amino acids incorporated), which drop off the ribosome during protein synthesis, or as a result of ribosome stalling. Its function is as follows. Catalyzes the release of premature peptidyl moieties from peptidyl-tRNA molecules trapped in stalled 50S ribosomal subunits, and thus maintains levels of free tRNAs and 50S ribosomes. This Streptococcus agalactiae serotype III (strain NEM316) protein is Peptidyl-tRNA hydrolase.